Consider the following 258-residue polypeptide: Imidazole glycerol phosphate synthase subunit HisF (258 aa).

Catalysis depends on residues Asp12 and Asp131.

Belongs to the HisA/HisF family. Heterodimer of HisH and HisF.

The protein localises to the cytoplasm. The catalysed reaction is 5-[(5-phospho-1-deoxy-D-ribulos-1-ylimino)methylamino]-1-(5-phospho-beta-D-ribosyl)imidazole-4-carboxamide + L-glutamine = D-erythro-1-(imidazol-4-yl)glycerol 3-phosphate + 5-amino-1-(5-phospho-beta-D-ribosyl)imidazole-4-carboxamide + L-glutamate + H(+). It participates in amino-acid biosynthesis; L-histidine biosynthesis; L-histidine from 5-phospho-alpha-D-ribose 1-diphosphate: step 5/9. IGPS catalyzes the conversion of PRFAR and glutamine to IGP, AICAR and glutamate. The HisF subunit catalyzes the cyclization activity that produces IGP and AICAR from PRFAR using the ammonia provided by the HisH subunit. The polypeptide is Imidazole glycerol phosphate synthase subunit HisF (Arthrobacter sp. (strain FB24)).